The sequence spans 428 residues: 3-phosphoshikimate 1-carboxyvinyltransferase (428 aa).

Lys-21, Ser-22, and Arg-26 together coordinate 3-phosphoshikimate. Lys-21 contributes to the phosphoenolpyruvate binding site. 2 residues coordinate phosphoenolpyruvate: Gly-91 and Arg-119. Positions 164, 166, 313, and 340 each coordinate 3-phosphoshikimate. Gln-166 is a binding site for phosphoenolpyruvate. Catalysis depends on Asp-313, which acts as the Proton acceptor. Residues Arg-344 and Arg-386 each coordinate phosphoenolpyruvate.

The protein belongs to the EPSP synthase family. In terms of assembly, monomer.

Its subcellular location is the cytoplasm. It catalyses the reaction 3-phosphoshikimate + phosphoenolpyruvate = 5-O-(1-carboxyvinyl)-3-phosphoshikimate + phosphate. The protein operates within metabolic intermediate biosynthesis; chorismate biosynthesis; chorismate from D-erythrose 4-phosphate and phosphoenolpyruvate: step 6/7. In terms of biological role, catalyzes the transfer of the enolpyruvyl moiety of phosphoenolpyruvate (PEP) to the 5-hydroxyl of shikimate-3-phosphate (S3P) to produce enolpyruvyl shikimate-3-phosphate and inorganic phosphate. In Campylobacter jejuni (strain RM1221), this protein is 3-phosphoshikimate 1-carboxyvinyltransferase.